We begin with the raw amino-acid sequence, 225 residues long: Pathogenesis-related thaumatin-like protein 3.8 (225 aa).

Positions 1-26 are cleaved as a signal peptide; the sequence is MAKVSDLALLLVAGMAISLYIQETGA. 8 disulfides stabilise this stretch: Cys35/Cys224, Cys76/Cys86, Cys91/Cys97, Cys139/Cys213, Cys144/Cys197, Cys152/Cys162, Cys166/Cys175, and Cys176/Cys184. An N-linked (GlcNAc...) asparagine glycan is attached at Asn188.

This sequence belongs to the thaumatin family.

In terms of biological role, may be involved in disease resistance. The sequence is that of Pathogenesis-related thaumatin-like protein 3.8 from Cryptomeria japonica (Japanese cedar).